Here is a 630-residue protein sequence, read N- to C-terminus: MEWDSESDGAGSIGAGEEEEEEEEEEEGGFGGGGGGGGGGGGMFSFAIEGMLRASGPCGLVVTDALEPDCPIIYVNCGFEEATGYRAEEVLGRNCRFLQCRGPFAQRRHPLVDAMVVSEIRKCIDNGTEFRGDLLNFRKDGSPLMNKLHLTPIYGDDETITHYMGIQFFTNANVDLGPLPGSLTKEPVRSTRFTPDNFFRPISTGPGQSNFCREYSSLFQLTDEVLCQSILSRLSPRDIASVSSVCRRLYLLTRNEDLWRMVCQNAWGSETTRALETVPAAKRLGWGRLARELTTLEAVAWRKLTVGGAVEPSRCNFSACAVGNRVVLFGGEGVNMQPMNDTFVLDLNASNPEWRHVNVSSAPPGRWGHTLSCLNGSLLVVFGGCGRQGLLNDVFTLDLDAKQPTWREIPGVAPPVPRSWHSSCTLDGTKLVVSGGCADSGVLLSDTYLLDVTMDKPVWREVPASWTPPSRLGHSMSVYGGRKILMFGGLAKSGPLRLRSSDVFTMDLSEEEPCWRCLTGSGMPGAGNPAGAGPPPRLDHVAVSLPGGRVLIFGGSVAGLHSASQLYLLDPTEEKPTWRILNVPGRPPRFAWGHSTCVVGGTKAIVLGGQTGEEWMLTEIHELSLASSTV.

The interval M1 to G36 is disordered. Acidic residues predominate over residues G16–G28. The PAS domain occupies I48–G127. C95 carries the post-translational modification S-4a-FMN cysteine. In terms of domain architecture, F-box spans S216–V262. Kelch repeat units lie at residues L378–G428, K430–G481, K483–P535, and R549–G601.

Belongs to the ADAGIO family. FMN binds covalently to cysteine after exposure to blue light and is reversed in the dark.

It is found in the nucleus. It functions in the pathway protein modification; protein ubiquitination. Functionally, component of an E3 ubiquitin ligase complex that plays a central role in blue light-dependent circadian cycles. Acts as a blue light photoreceptor, due to the presence of FMN, that mediates light-regulated protein degradation of critical clock components by targeting them to the proteasome complex. The sequence is that of Adagio-like protein 1 from Oryza sativa subsp. japonica (Rice).